The primary structure comprises 535 residues: Protein PyrBI (535 aa).

The aspartate carbamoyltransferase stretch occupies residues 1 to 341 (MENKFMGRSL…MIAGKIGDDY (341 aa)). A linker region spans residues 342 to 370 (KGPEPKSCERVEDEDYIVEVPINNSKESK). Positions 371–535 (VETFSEGVRP…FKEIWGEKKN (165 aa)) are aspartate carbamoyltransferase regulatory region. Residues cysteine 488, cysteine 493, cysteine 517, and cysteine 520 each coordinate Zn(2+).

This sequence in the N-terminal section; belongs to the aspartate/ornithine carbamoyltransferase superfamily. ATCase family. It in the C-terminal section; belongs to the PyrI family.

It catalyses the reaction carbamoyl phosphate + L-aspartate = N-carbamoyl-L-aspartate + phosphate + H(+). It functions in the pathway pyrimidine metabolism; UMP biosynthesis via de novo pathway; (S)-dihydroorotate from bicarbonate: step 2/3. This chain is Protein PyrBI (pyrBI), found in Treponema denticola (strain ATCC 35405 / DSM 14222 / CIP 103919 / JCM 8153 / KCTC 15104).